The sequence spans 353 residues: Ferrochelatase (353 aa).

Fe cation is bound by residues H223 and E304.

It belongs to the ferrochelatase family.

Its subcellular location is the cytoplasm. It catalyses the reaction heme b + 2 H(+) = protoporphyrin IX + Fe(2+). Its pathway is porphyrin-containing compound metabolism; protoheme biosynthesis; protoheme from protoporphyrin-IX: step 1/1. In terms of biological role, catalyzes the ferrous insertion into protoporphyrin IX. The protein is Ferrochelatase of Mesorhizobium japonicum (strain LMG 29417 / CECT 9101 / MAFF 303099) (Mesorhizobium loti (strain MAFF 303099)).